The primary structure comprises 326 residues: DNA polymerase III subunit delta' (326 aa).

As to quaternary structure, DNA polymerase III contains a core (composed of alpha, epsilon and theta chains) that associates with a tau subunit. This core dimerizes to form the POLIII' complex. PolIII' associates with the gamma complex (composed of gamma, delta, delta', psi and chi chains) and with the beta chain to form the complete DNA polymerase III complex.

It catalyses the reaction DNA(n) + a 2'-deoxyribonucleoside 5'-triphosphate = DNA(n+1) + diphosphate. In terms of biological role, DNA polymerase III is a complex, multichain enzyme responsible for most of the replicative synthesis in bacteria. This DNA polymerase also exhibits 3' to 5' exonuclease activity. The polypeptide is DNA polymerase III subunit delta' (holB) (Buchnera aphidicola subsp. Acyrthosiphon pisum (strain APS) (Acyrthosiphon pisum symbiotic bacterium)).